The following is a 219-amino-acid chain: HTH-type transcriptional activator FasR (219 aa).

Residues 1-30 (MSDLANTAERRGEKRPAGGNRRGNRLPRDE) form a disordered region. The HTH tetR-type domain maps to 29–89 (DERRGQLLIA…AVLQRHVDNL (61 aa)). Residues 52 to 71 (GMDEIADRAGVSKPVLYQHF) constitute a DNA-binding region (H-T-H motif).

In terms of assembly, homodimer.

Its activity is regulated as follows. FasR:DNA binding is regulated by long-chain acyl-CoAs (C14- to C26-CoA), which act as effector molecules that modulate the affinity of FasR for its DNA binding sequences and therefore modulate the expression of the essential fas-acpS operon. Functionally, transcriptional activator that plays a central role in sensing mycobacterial long-chain fatty acids and regulating lipid biosynthesis. Activates the expression of the genes encoding the fatty acid synthase (fas) and the 4-phosphopantetheinyl transferase (acpS), whose products are involved in the fatty acid and mycolic acid biosynthesis. Specifically binds to three conserved operator sequences present in the fas-acpS promoter region. Essential for M.smegmatis viability. The chain is HTH-type transcriptional activator FasR from Mycolicibacterium smegmatis (strain ATCC 700084 / mc(2)155) (Mycobacterium smegmatis).